The primary structure comprises 374 residues: NADH-quinone oxidoreductase subunit D 1 (374 aa).

This sequence belongs to the complex I 49 kDa subunit family. As to quaternary structure, NDH-1 is composed of 14 different subunits. Subunits NuoB, C, D, E, F, and G constitute the peripheral sector of the complex.

The protein localises to the cell membrane. It carries out the reaction a quinone + NADH + 5 H(+)(in) = a quinol + NAD(+) + 4 H(+)(out). NDH-1 shuttles electrons from NADH, via FMN and iron-sulfur (Fe-S) centers, to quinones in the respiratory chain. The immediate electron acceptor for the enzyme in this species is believed to be ubiquinone. Couples the redox reaction to proton translocation (for every two electrons transferred, four hydrogen ions are translocated across the cytoplasmic membrane), and thus conserves the redox energy in a proton gradient. The chain is NADH-quinone oxidoreductase subunit D 1 from Roseiflexus sp. (strain RS-1).